The primary structure comprises 688 residues: DNA ligase (688 aa).

NAD(+) contacts are provided by residues 38 to 42 (DEEYD), 87 to 88 (SL), and E118. K120 (N6-AMP-lysine intermediate) is an active-site residue. The NAD(+) site is built by R141, E175, K291, and K315. Zn(2+) is bound by residues C409, C412, C428, and C433. In terms of domain architecture, BRCT spans 590-679 (MKLDILKGLT…AELKGYNFDE (90 aa)).

It belongs to the NAD-dependent DNA ligase family. LigA subfamily. Mg(2+) is required as a cofactor. The cofactor is Mn(2+).

The catalysed reaction is NAD(+) + (deoxyribonucleotide)n-3'-hydroxyl + 5'-phospho-(deoxyribonucleotide)m = (deoxyribonucleotide)n+m + AMP + beta-nicotinamide D-nucleotide.. Its function is as follows. DNA ligase that catalyzes the formation of phosphodiester linkages between 5'-phosphoryl and 3'-hydroxyl groups in double-stranded DNA using NAD as a coenzyme and as the energy source for the reaction. It is essential for DNA replication and repair of damaged DNA. This chain is DNA ligase, found in Thermotoga petrophila (strain ATCC BAA-488 / DSM 13995 / JCM 10881 / RKU-1).